We begin with the raw amino-acid sequence, 176 residues long: Isopentenyl-diphosphate Delta-isomerase 1 (176 aa).

The Mn(2+) site is built by histidine 23 and histidine 30. A Nudix hydrolase domain is found at histidine 28–lysine 162. Cysteine 65 is an active-site residue. Cysteine 65 is a Mg(2+) binding site. Residue histidine 67 participates in Mn(2+) binding. Residue glutamate 85 coordinates Mg(2+). Mn(2+)-binding residues include glutamate 112 and glutamate 114. Glutamate 114 is an active-site residue.

It belongs to the IPP isomerase type 1 family. Homodimer. Mg(2+) serves as cofactor. The cofactor is Mn(2+).

The protein resides in the cytoplasm. It catalyses the reaction isopentenyl diphosphate = dimethylallyl diphosphate. It participates in isoprenoid biosynthesis; dimethylallyl diphosphate biosynthesis; dimethylallyl diphosphate from isopentenyl diphosphate: step 1/1. In terms of biological role, catalyzes the 1,3-allylic rearrangement of the homoallylic substrate isopentenyl (IPP) to its highly electrophilic allylic isomer, dimethylallyl diphosphate (DMAPP). In Photorhabdus laumondii subsp. laumondii (strain DSM 15139 / CIP 105565 / TT01) (Photorhabdus luminescens subsp. laumondii), this protein is Isopentenyl-diphosphate Delta-isomerase 1.